A 336-amino-acid polypeptide reads, in one-letter code: uncharacterized protein (336 aa).

29–36 contributes to the ATP binding site; it reads GPKSSGKS.

It belongs to the archaeal ATPase family.

This is an uncharacterized protein from Methanocaldococcus jannaschii (strain ATCC 43067 / DSM 2661 / JAL-1 / JCM 10045 / NBRC 100440) (Methanococcus jannaschii).